The sequence spans 169 residues: Allophycocyanin subunit beta-18 (169 aa).

Position 72 is an N4-methylasparagine (asparagine 72). Cysteine 82 provides a ligand contact to (2R,3E)-phycocyanobilin.

It belongs to the phycobiliprotein family. Heterodimer of an alpha and a beta chain. In terms of processing, contains one covalently linked bilin chromophore.

Its subcellular location is the plastid. The protein localises to the chloroplast thylakoid membrane. Functionally, light-harvesting photosynthetic bile pigment-protein from the phycobiliprotein complex. Allophycocyanin has a maximum absorption at approximately 650 nanometers. This is Allophycocyanin subunit beta-18 (apcF) from Pyropia yezoensis (Susabi-nori).